The following is a 230-amino-acid chain: Ureidoacrylate amidohydrolase RutB (230 aa).

Asp-24 acts as the Proton acceptor in catalysis. Lys-133 is a catalytic residue. Cys-166 functions as the Nucleophile in the catalytic mechanism.

This sequence belongs to the isochorismatase family. RutB subfamily.

It catalyses the reaction (Z)-3-ureidoacrylate + H2O + H(+) = (Z)-3-aminoacrylate + NH4(+) + CO2. The enzyme catalyses (Z)-3-ureidoacrylate + H2O = (Z)-3-aminoacrylate + carbamate + H(+). It carries out the reaction (Z)-2-methylureidoacrylate + H2O + H(+) = (Z)-2-methylaminoacrylate + NH4(+) + CO2. Functionally, hydrolyzes ureidoacrylate to form aminoacrylate and carbamate. The carbamate hydrolyzes spontaneously, thereby releasing one of the nitrogen atoms of the pyrimidine ring as ammonia and one of its carbon atoms as CO2. The polypeptide is Ureidoacrylate amidohydrolase RutB (Escherichia coli O127:H6 (strain E2348/69 / EPEC)).